Reading from the N-terminus, the 72-residue chain is uncharacterized protein (72 aa).

The chain crosses the membrane as a helical span at residues 11–31; sequence WCCTVLSAFGVVILSVIAHLF.

Its subcellular location is the membrane. This is an uncharacterized protein from Saccharomyces cerevisiae (strain ATCC 204508 / S288c) (Baker's yeast).